Consider the following 223-residue polypeptide: Cytidylate kinase (223 aa).

10-18 contributes to the ATP binding site; it reads GPAGSGKSS.

This sequence belongs to the cytidylate kinase family. Type 1 subfamily.

The protein resides in the cytoplasm. It carries out the reaction CMP + ATP = CDP + ADP. The enzyme catalyses dCMP + ATP = dCDP + ADP. The sequence is that of Cytidylate kinase from Pseudothermotoga lettingae (strain ATCC BAA-301 / DSM 14385 / NBRC 107922 / TMO) (Thermotoga lettingae).